A 232-amino-acid chain; its full sequence is MESTLFLSKPLPTTIKTTTHSLSSVYPNPFKPNNLTFPRTTHKHPTTTTITAAISRTKKEETVETVQKHLENCYLLAAINYKGFTVKQFQDLRKALPENTTLIVAKNTLVEKAVQDTQWAAIKPCMKGMNAWLFVHSEEIPIAIKPYRTFQKERKLEDNDFTGACFEGKFYGPGEVKRLETMPSKAEIFAKLLGSLKSPGSALVGTLQAPARDLVFLLKAYIKKLEDEQQQG.

The transit peptide at 1-52 (MESTLFLSKPLPTTIKTTTHSLSSVYPNPFKPNNLTFPRTTHKHPTTTTITA) directs the protein to the chloroplast.

It belongs to the universal ribosomal protein uL10 family. As to quaternary structure, component of the chloroplast large ribosomal subunit (LSU). Mature 70S chloroplast ribosomes of higher plants consist of a small (30S) and a large (50S) subunit. The 30S small subunit contains 1 molecule of ribosomal RNA (16S rRNA) and 24 different proteins. The 50S large subunit contains 3 rRNA molecules (23S, 5S and 4.5S rRNA) and 33 different proteins.

It localises to the plastid. Its subcellular location is the chloroplast. Its function is as follows. Component of the chloroplast ribosome (chloro-ribosome), a dedicated translation machinery responsible for the synthesis of chloroplast genome-encoded proteins, including proteins of the transcription and translation machinery and components of the photosynthetic apparatus. The polypeptide is Large ribosomal subunit protein uL10c (RPL10) (Spinacia oleracea (Spinach)).